We begin with the raw amino-acid sequence, 193 residues long: Ribonuclease HII (193 aa).

The RNase H type-2 domain maps to 3-192; the sequence is SLVAGIDEVG…VRAVIDRSSA (190 aa). A divalent metal cation is bound by residues Asp9, Glu10, and Asp101.

This sequence belongs to the RNase HII family. Mn(2+) serves as cofactor. The cofactor is Mg(2+).

It is found in the cytoplasm. It carries out the reaction Endonucleolytic cleavage to 5'-phosphomonoester.. Its function is as follows. Endonuclease that specifically degrades the RNA of RNA-DNA hybrids. This is Ribonuclease HII from Methylococcus capsulatus (strain ATCC 33009 / NCIMB 11132 / Bath).